The chain runs to 240 residues: MIAFIVLPILAAVLQQSSGNVDFDSESPRKPEIQNEIIDLHNSLRRSVNPTASNMLKMEWYPEAAANAERWAYGCIESHSSRDSRVIEGIKCGENIYMSPYPMKWTDIIHAWHGEYKDFKYGVGAVPSDAVVGHYTQIVWYKSYRIGCAAAYCPSAEYSYFYVCQYCPAGNMIGKTATPYTSGPPCGDCPSDCDNGLCTNPCRQENKFTNCDSLVRQSSCQDNYMKTNCPASCFCHNEII.

Positions 1 to 19 (MIAFIVLPILAAVLQQSSG) are cleaved as a signal peptide. Residues 39 to 166 (DLHNSLRRSV…EYSYFYVCQY (128 aa)) form the SCP domain. 8 disulfides stabilise this stretch: Cys-75/Cys-153, Cys-92/Cys-167, Cys-148/Cys-164, Cys-186/Cys-193, Cys-189/Cys-198, Cys-202/Cys-235, Cys-211/Cys-229, and Cys-220/Cys-233. The region spanning 202–235 (CRQENKFTNCDSLVRQSSCQDNYMKTNCPASCFC) is the ShKT domain.

The protein belongs to the CRISP family. As to expression, expressed by the venom gland.

The protein resides in the secreted. In terms of biological role, blocks contraction of smooth muscle elicited by high potassium-induced depolarization, but does not block caffeine-stimulated contraction. May target voltage-gated calcium channels on smooth muscle. This is Cysteine-rich venom protein from Protobothrops jerdonii (Jerdon's pitviper).